The sequence spans 786 residues: Endonuclease MutS2 (786 aa).

An ATP-binding site is contributed by 333–340 (GPNTGGKT). Positions 711–786 (LDLRGERYDQ…GSGATIVNFK (76 aa)) constitute a Smr domain.

This sequence belongs to the DNA mismatch repair MutS family. MutS2 subfamily. As to quaternary structure, homodimer. Binds to stalled ribosomes, contacting rRNA.

Endonuclease that is involved in the suppression of homologous recombination and thus may have a key role in the control of bacterial genetic diversity. In terms of biological role, acts as a ribosome collision sensor, splitting the ribosome into its 2 subunits. Detects stalled/collided 70S ribosomes which it binds and splits by an ATP-hydrolysis driven conformational change. Acts upstream of the ribosome quality control system (RQC), a ribosome-associated complex that mediates the extraction of incompletely synthesized nascent chains from stalled ribosomes and their subsequent degradation. Probably generates substrates for RQC. This chain is Endonuclease MutS2, found in Lacticaseibacillus paracasei (strain ATCC 334 / BCRC 17002 / CCUG 31169 / CIP 107868 / KCTC 3260 / NRRL B-441) (Lactobacillus paracasei).